A 370-amino-acid chain; its full sequence is Serine O-succinyltransferase (370 aa).

The AB hydrolase-1 domain maps to 46–355; sequence AILIVTGLSP…PQGHDAFLVD (310 aa). The important for substrate specificity stretch occupies residues 52–55; the sequence is GLSP. S149 acts as the Nucleophile in catalysis. R218 serves as a coordination point for substrate. Residues D316 and H349 contribute to the active site. D350 serves as a coordination point for substrate.

The protein belongs to the AB hydrolase superfamily. MetX family. In terms of assembly, homodimer.

The protein resides in the cytoplasm. It catalyses the reaction succinyl-CoA + L-serine = O-succinyl-L-serine + CoA. The catalysed reaction is L-homoserine + succinyl-CoA = O-succinyl-L-homoserine + CoA. It functions in the pathway amino-acid biosynthesis; L-cysteine biosynthesis; L-cysteine from L-serine: step 1/2. Transfers a succinyl group from succinyl-CoA to L-serine, forming succinyl-L-serine. In vitro, also has homoserine succinyl transferase activity. The protein is Serine O-succinyltransferase of Stenotrophomonas maltophilia (Pseudomonas maltophilia).